Here is a 243-residue protein sequence, read N- to C-terminus: Small ribosomal subunit protein eS4 (243 aa).

The 63-residue stretch at 43-105 folds into the S4 RNA-binding domain; that stretch reads IPLLYIVRDY…TGEHYRVLPN (63 aa).

It belongs to the eukaryotic ribosomal protein eS4 family.

The chain is Small ribosomal subunit protein eS4 (rps4e) from Pyrococcus horikoshii (strain ATCC 700860 / DSM 12428 / JCM 9974 / NBRC 100139 / OT-3).